Consider the following 676-residue polypeptide: Periplasmic alpha-amylase (676 aa).

The first 17 residues, 1-17 (MKLAACFLTLLPGFAVA), serve as a signal peptide directing secretion. Intrachain disulfides connect C57-C75 and C121-C537. Residue N314 coordinates Ca(2+). D460 acts as the Nucleophile in catalysis. H464 provides a ligand contact to Ca(2+). E503 functions as the Proton donor in the catalytic mechanism.

The protein belongs to the glycosyl hydrolase 13 family. In terms of assembly, monomer. Ca(2+) serves as cofactor.

It localises to the periplasm. It catalyses the reaction Endohydrolysis of (1-&gt;4)-alpha-D-glucosidic linkages in polysaccharides containing three or more (1-&gt;4)-alpha-linked D-glucose units.. In terms of biological role, since only maltooligosaccharides up to a chain length of 6 glucose units are actively transported through the cytoplasmic membrane via the membrane-bound complex of three proteins, MalF, MalG, and MalK, longer maltooligosaccharides must first be degraded by the periplasmic alpha-amylase, the MalS protein. This chain is Periplasmic alpha-amylase (malS), found in Escherichia coli (strain K12).